A 610-amino-acid polypeptide reads, in one-letter code: Elongation factor 4 (610 aa).

Positions 11-193 (EKIRNFSIIA…QIVEKVPAPT (183 aa)) constitute a tr-type G domain. Residues 23-28 (DHGKST) and 140-143 (NKID) contribute to the GTP site.

It belongs to the TRAFAC class translation factor GTPase superfamily. Classic translation factor GTPase family. LepA subfamily.

It localises to the cell membrane. It carries out the reaction GTP + H2O = GDP + phosphate + H(+). In terms of biological role, required for accurate and efficient protein synthesis under certain stress conditions. May act as a fidelity factor of the translation reaction, by catalyzing a one-codon backward translocation of tRNAs on improperly translocated ribosomes. Back-translocation proceeds from a post-translocation (POST) complex to a pre-translocation (PRE) complex, thus giving elongation factor G a second chance to translocate the tRNAs correctly. Binds to ribosomes in a GTP-dependent manner. The protein is Elongation factor 4 of Streptococcus pyogenes serotype M3 (strain ATCC BAA-595 / MGAS315).